The following is a 174-amino-acid chain: Zinc finger AN1 domain-containing stress-associated protein 15 (174 aa).

The interval 1 to 61 is disordered; it reads MAQESCDLNK…TPPAAAAAAS (61 aa). Residues 18-41 are compositionally biased toward low complexity; that stretch reads PSSSSSPSPSPTTASPSPPTAQMT. The span at 42–54 shows a compositional bias: pro residues; sequence EPPPPQSTPPTPP. An AN1-type zinc finger spans residues 109-155; sequence VLFVNRCNVCRKRVGLTGFRCRCGELFCPRHRHSETHECSFDYKTAG. 8 residues coordinate Zn(2+): Cys-115, Cys-118, Cys-129, Cys-131, Cys-136, His-139, His-145, and Cys-147.

In terms of biological role, may be involved in environmental stress response. This chain is Zinc finger AN1 domain-containing stress-associated protein 15 (SAP15), found in Oryza sativa subsp. japonica (Rice).